Here is a 311-residue protein sequence, read N- to C-terminus: Pyrimidine-specific ribonucleoside hydrolase RihA (311 aa).

The active site involves His-240.

Belongs to the IUNH family. RihA subfamily.

Hydrolyzes with equal efficiency cytidine or uridine to ribose and cytosine or uracil, respectively. The sequence is that of Pyrimidine-specific ribonucleoside hydrolase RihA from Escherichia coli (strain SMS-3-5 / SECEC).